A 246-amino-acid polypeptide reads, in one-letter code: Bis(5'-nucleosyl)-tetraphosphatase PrpE [asymmetrical] (246 aa).

This sequence belongs to the PrpE family. Ni(2+) is required as a cofactor.

The catalysed reaction is P(1),P(4)-bis(5'-guanosyl) tetraphosphate + H2O = GMP + GTP + 2 H(+). Its function is as follows. Asymmetrically hydrolyzes Ap4p to yield AMP and ATP. The sequence is that of Bis(5'-nucleosyl)-tetraphosphatase PrpE [asymmetrical] from Halalkalibacterium halodurans (strain ATCC BAA-125 / DSM 18197 / FERM 7344 / JCM 9153 / C-125) (Bacillus halodurans).